We begin with the raw amino-acid sequence, 381 residues long: Cytochrome b (381 aa).

4 helical membrane passes run 33–53 (FGSLLGMCLIIQILTGLFLAM), 77–98 (WLLRNLHANGASMFFMCLFLHV), 113–133 (WNIGVILLLTVMATAFVGYVL), and 178–198 (FFAFHFILPFIIMALAVVHLL). 2 residues coordinate heme b: histidine 83 and histidine 97. The heme b site is built by histidine 182 and histidine 196. An a ubiquinone-binding site is contributed by histidine 201. The next 4 membrane-spanning stretches (helical) occupy residues 226–246 (IKDALGFMLLLLVLLLLALFS), 288–308 (LGGVLAVLASILILLIIPLLH), 320–340 (VSQTLFWILTANLITLTWIGG), and 347–367 (FIIIGQLAPMPYFLLILVMMP).

It belongs to the cytochrome b family. As to quaternary structure, the cytochrome bc1 complex contains 11 subunits: 3 respiratory subunits (MT-CYB, CYC1 and UQCRFS1), 2 core proteins (UQCRC1 and UQCRC2) and 6 low-molecular weight proteins (UQCRH/QCR6, UQCRB/QCR7, UQCRQ/QCR8, UQCR10/QCR9, UQCR11/QCR10 and a cleavage product of UQCRFS1). This cytochrome bc1 complex then forms a dimer. It depends on heme b as a cofactor.

The protein localises to the mitochondrion inner membrane. Component of the ubiquinol-cytochrome c reductase complex (complex III or cytochrome b-c1 complex) that is part of the mitochondrial respiratory chain. The b-c1 complex mediates electron transfer from ubiquinol to cytochrome c. Contributes to the generation of a proton gradient across the mitochondrial membrane that is then used for ATP synthesis. The sequence is that of Cytochrome b (MT-CYB) from Dasyurus hallucatus (Northern quoll).